The following is a 66-amino-acid chain: Alpha-conotoxin RegIIA (66 aa).

The first 21 residues, 1–21, serve as a signal peptide directing secretion; sequence MGMRMMFTVFLLVVLTTTVVS. Positions 22-49 are excised as a propeptide; that stretch reads STSVRASDGRNAAADNRASDLIAQIVRR. Cystine bridges form between Cys-51-Cys-57 and Cys-52-Cys-65. The interval 53-55 is ser-Xaa-Pro motif, crucial for potent interaction with nAChR; the sequence is SHP. At Cys-65 the chain carries Cysteine amide.

It belongs to the conotoxin A superfamily. Expressed by the venom duct.

Its subcellular location is the secreted. Alpha-conotoxins act on postsynaptic membranes, they bind to the nicotinic acetylcholine receptors (nAChR) and thus inhibit them. This toxin potently inhibits alpha-3 containing subunit nAChR. It inhibits alpha-3-beta-2/CHRNA3-CHRNB2 (IC(50)=10.7-33 nM (rat)/132.4-704.1 nM (human)) and alpha-3-beta-4/CHRNA3-CHRNB4 (IC(50)=47.3-97 nM (rat)/52.1 nM (human)). It also inhibits alpha-7/CHRNA7 nAChR with IC(50)=103-210 nM (human)/41-61.2 nM (rat) nAChRs. It is more potent on alpha-3-beta-2 receptors in human than in rat, due to a variation (Pro vs Gln) in alpha-3 subunit in these orthologs. Conversely, does not show species-specific differences in sensitivity at the alpha-3-beta-4 receptor. In Conus regius (Crown cone), this protein is Alpha-conotoxin RegIIA.